The chain runs to 289 residues: Bifunctional protein FolD (289 aa).

NADP(+) contacts are provided by residues 166 to 168 (GRS), S191, and I232.

The protein belongs to the tetrahydrofolate dehydrogenase/cyclohydrolase family. In terms of assembly, homodimer.

The catalysed reaction is (6R)-5,10-methylene-5,6,7,8-tetrahydrofolate + NADP(+) = (6R)-5,10-methenyltetrahydrofolate + NADPH. It carries out the reaction (6R)-5,10-methenyltetrahydrofolate + H2O = (6R)-10-formyltetrahydrofolate + H(+). It participates in one-carbon metabolism; tetrahydrofolate interconversion. In terms of biological role, catalyzes the oxidation of 5,10-methylenetetrahydrofolate to 5,10-methenyltetrahydrofolate and then the hydrolysis of 5,10-methenyltetrahydrofolate to 10-formyltetrahydrofolate. The protein is Bifunctional protein FolD of Synechococcus sp. (strain JA-3-3Ab) (Cyanobacteria bacterium Yellowstone A-Prime).